The sequence spans 163 residues: Protein-export protein SecB (163 aa).

It belongs to the SecB family. Homotetramer, a dimer of dimers. One homotetramer interacts with 1 SecA dimer.

It is found in the cytoplasm. In terms of biological role, one of the proteins required for the normal export of preproteins out of the cell cytoplasm. It is a molecular chaperone that binds to a subset of precursor proteins, maintaining them in a translocation-competent state. It also specifically binds to its receptor SecA. The sequence is that of Protein-export protein SecB from Burkholderia ambifaria (strain MC40-6).